Consider the following 192-residue polypeptide: ER protein translocation subcomplex subunit sec67 (192 aa).

Component of the heterotetrameric Sec62/63complex composed of sec62, sec63, sec66 and sec72. The Sec62/63 complex associates with the Sec61 complex to form the Sec complex.

The protein localises to the cytoplasm. It localises to the nucleus. Its function is as follows. Acts as a non-essential component of the Sec62/63 complex which is involved in SRP-independent post-translational translocation across the endoplasmic reticulum (ER) and functions together with the Sec61 complex and bip1 in a channel-forming translocon complex. A cycle of assembly and disassembly of Sec62/63 complex from sec61 may govern the activity of the translocon. sec72 may be involved in signal peptide recognition for a defined subset of leader peptides, or may increase the efficiency of unusual or 'difficult' secretory precursors to the translocation pore, it may be that this protein binds charged leader peptides to the membrane until they engage the translocation apparatus. In Schizosaccharomyces pombe (strain 972 / ATCC 24843) (Fission yeast), this protein is ER protein translocation subcomplex subunit sec67 (sec67).